The sequence spans 555 residues: Wee1-like protein kinase 2-A (555 aa).

Disordered regions lie at residues 1 to 81 and 149 to 175; these read MRTA…SVGA and FTPE…DCRT. Residues 38 to 48 show a composition bias toward polar residues; it reads SPVSSWRTNNC. Positions 68–78 are enriched in low complexity; it reads SPSSDYSPDPS. Positions 149-160 are enriched in polar residues; it reads FTPESYRQTHFQ. Residues 210-480 form the Protein kinase domain; that stretch reads FLEIEKIGAG…AASLAKNSVL (271 aa). Residues 216-224 and Lys-239 contribute to the ATP site; that span reads IGAGEFGSV. Asp-337 functions as the Proton acceptor in the catalytic mechanism. Mg(2+) is bound by residues Asn-342 and Asp-374. The stretch at 487 to 513 forms a coiled coil; it reads AAQLQKQLNVEKFKTAMLERELKAAKL. A Phosphoserine modification is found at Ser-549.

Belongs to the protein kinase superfamily. Ser/Thr protein kinase family. WEE1 subfamily. In terms of assembly, interacts with prmt5; this promotes protesomal degradation of wee2-a in the nucleus. The interaction with prmt5 is disrupted upon activation of the DNA replication checkpoint. In terms of processing, subject to proteasomal degradation in the nucleus. Detected in egg (at protein level). Oocyte-specific maternally supplied protein. Present in immature and mature oocytes and in early (pregastrula) embryos, but not in post-gastrula embryos.

Its subcellular location is the nucleus. The protein localises to the cytoplasm. The protein resides in the cytosol. The catalysed reaction is L-tyrosyl-[protein] + ATP = O-phospho-L-tyrosyl-[protein] + ADP + H(+). Functionally, oocyte-specific protein tyrosine kinase that phosphorylates and inhibits cdk1 and acts as a key regulator of meiosis. Required to maintain meiotic arrest in oocytes by phosphorylating cdk1 at 'Tyr-15', which inhibits cdk1 activity and prevents meiotic reentry. Negative regulator of mitosis. Involved in the mitotic DNA replication checkpoint. This chain is Wee1-like protein kinase 2-A (wee2-a), found in Xenopus laevis (African clawed frog).